The chain runs to 57 residues: Benzylsuccinate synthase gamma subunit (57 aa).

Heterohexamer composed of 2 alpha subunits, 2 beta subunits and 2 gamma subunits.

The catalysed reaction is toluene + fumarate = 2-benzylsuccinate. Its pathway is xenobiotic degradation; toluene degradation. With respect to regulation, activated by the benzylsuccinate synthase activating enzyme BssD. Rapidly inactivated by oxygen. In terms of biological role, catalyzes the addition of fumarate to the methyl group of toluene, leading to the formation of benzylsuccinate. The sequence is that of Benzylsuccinate synthase gamma subunit (bssC) from Thauera aromatica.